The primary structure comprises 1209 residues: Calcium-activated potassium channel subunit alpha-1 (1209 aa).

Positions 1–23 are enriched in gly residues; sequence MANGGGGGGGSSGGGGGGGGGSG. Residues 1-61 are disordered; the sequence is MANGGGGGGG…SSSSSSSSSV (61 aa). At 1–86 the chain is on the extracellular side; the sequence is MANGGGGGGG…VPCDSRGQRM (86 aa). The segment covering 25 to 39 has biased composition (polar residues); the sequence is RMSSNIHANNLSLDA. The span at 40 to 60 shows a compositional bias: low complexity; the sequence is SSSSSSSSSSSSSSSSSSSSS. A helical membrane pass occupies residues 87 to 107; it reads WWAFLASSMVTFFGGLFIILL. The Cytoplasmic portion of the chain corresponds to 108 to 178; that stretch reads WRTLKYLWTV…MISAQTLTGR (71 aa). Residues Cys118, Cys119, and Cys121 are each lipidated (S-palmitoyl cysteine). A helical transmembrane segment spans residues 179-199; that stretch reads VLVVLVFALSIGALVIYFIDS. At 200–214 the chain is on the extracellular side; the sequence is SNPIESCQNFYKDFT. Residues 215 to 235 form a helical membrane-spanning segment; that stretch reads LQIDMAFNVFFLLYFGLRFIA. The Cytoplasmic segment spans residues 236–239; that stretch reads ANDK. Residues 240–260 form a helical membrane-spanning segment; sequence LWFWLEVNSVVDFFTVPPVFV. Residues 261–264 are Extracellular-facing; sequence SVYL. A helical; Voltage-sensor membrane pass occupies residues 265–285; that stretch reads NRSWLGLRFLRALRLIQFSEI. Residues 286 to 300 lie on the Cytoplasmic side of the membrane; sequence LQFLNILKTSNSIKL. The helical transmembrane segment at 301–321 threads the bilayer; that stretch reads VNLLSIFISTWLTAAGFIHLV. The Extracellular portion of the chain corresponds to 322 to 335; the sequence is ENSGDPWENFQNNQ. Positions 336 to 358 form an intramembrane region, pore-forming; it reads ALTYWECVYLLMVTMSTVGYGDV. Residues 352-355 carry the Selectivity for potassium motif; sequence TVGY. Over 359 to 367 the chain is Extracellular; the sequence is YAKTTLGRL. A helical membrane pass occupies residues 368–388; the sequence is FMVFFILGGLAMFASYVPEII. Residues 389-1209 are Cytoplasmic-facing; it reads ELIGNRKKYG…KQNRKEMVYR (821 aa). The RCK N-terminal 1 domain occupies 407-549; sequence RKHIVVCGHI…WNWKEGDDAI (143 aa). Positions 439, 462, and 464 each coordinate Mg(2+). The interval 556 to 576 is segment S7; the sequence is LGFIAQSCLAQGLSTMLANLF. Residues 613–633 are segment S8; that stretch reads LSFPTVCELCFVKLKLLMIAI. Asp670 bears the Phosphothreonine mark. At Lys672 the chain carries Phosphoserine. The tract at residues 681-685 is heme-binding motif; that stretch reads CKACH. The disordered stretch occupies residues 703-733; it reads EDEQPPTLSPKKKQRNGGMRNSPNTSPKLMR. Thr709 carries the post-translational modification Phosphothreonine. A phosphoserine mark is found at Ser711, Ser724, and Ser728. The segment at 783–803 is segment S9; the sequence is VLSGHVVVCIFGDVSSALIGL. The region spanning 785–929 is the RCK N-terminal 2 domain; that stretch reads SGHVVVCIFG…MDRSSPDNSP (145 aa). Position 916 is a phosphothreonine (Thr916). Phosphoserine is present on residues Ser924 and Ser928. The short motif at 976–998 is the Calcium bowl element; that stretch reads TELVNDTNVQFLDQDDDDDPDTE. Residues Gln985, Asp988, Asp991, and Asp993 each contribute to the Ca(2+) site. The segment S10 stretch occupies residues 1005-1025; sequence FACGTAFAVSVLDSLMSATYF. A compositionally biased stretch (low complexity) spans 1159–1184; sequence RASLSHSSHSSQSSSKKSSSVHSIPS. Residues 1159 to 1209 are disordered; it reads RASLSHSSHSSQSSSKKSSSVHSIPSTANRPNRPKSRESRDKQNRKEMVYR. The segment covering 1193-1209 has biased composition (basic and acidic residues); the sequence is KSRESRDKQNRKEMVYR. Phosphoserine is present on residues Ser1194 and Ser1197.

Belongs to the potassium channel family. Calcium-activated (TC 1.A.1.3) subfamily. KCa1.1/KCNMA1 sub-subfamily. In terms of assembly, homotetramer; which constitutes the calcium-activated potassium channel. Interacts with beta subunits KCNMB1, KCNMB2, KCNMB3 and KCNMB4. Interacts with gamma subunits LRRC26, LRRC38, LRRC52 and LRRC55. Beta and gamma subunits are accessory, and modulate its activity. Interacts with RAB11B. In terms of processing, phosphorylated. Phosphorylation by kinases such as PKA and/or PKG. In smooth muscles, phosphorylation affects its activity. Post-translationally, palmitoylation by ZDHHC22 and ZDHHC23 within the intracellular linker between the S0 and S1 transmembrane domains regulates localization to the plasma membrane. Depalmitoylated by LYPLA1 and LYPLAL1, leading to retard exit from the trans-Golgi network.

It localises to the cell membrane. The catalysed reaction is K(+)(in) = K(+)(out). With respect to regulation, ethanol and carbon monoxide-bound heme increase channel activation. Heme inhibits channel activation. In terms of biological role, potassium channel activated by both membrane depolarization or increase in cytosolic Ca(2+) that mediates export of K(+). It is also activated by the concentration of cytosolic Mg(2+). Its activation dampens the excitatory events that elevate the cytosolic Ca(2+) concentration and/or depolarize the cell membrane. It therefore contributes to repolarization of the membrane potential. Plays a key role in controlling excitability in a number of systems, such as regulation of the contraction of smooth muscle, the tuning of hair cells in the cochlea, regulation of transmitter release, and innate immunity. In smooth muscles, its activation by high level of Ca(2+), caused by ryanodine receptors in the sarcoplasmic reticulum, regulates the membrane potential. In cochlea cells, its number and kinetic properties partly determine the characteristic frequency of each hair cell and thereby helps to establish a tonotopic map. Kinetics of KCNMA1 channels are determined by alternative splicing, phosphorylation status and its combination with modulating beta subunits. Highly sensitive to both iberiotoxin (IbTx) and charybdotoxin (CTX). Its function is as follows. Potassium channel activated by both membrane depolarization or increase in cytosolic Ca(2+) that mediates export of K(+). This is Calcium-activated potassium channel subunit alpha-1 (Kcnma1) from Mus musculus (Mouse).